We begin with the raw amino-acid sequence, 225 residues long: Leucyl/phenylalanyl-tRNA--protein transferase (225 aa).

The protein belongs to the L/F-transferase family.

The protein resides in the cytoplasm. It catalyses the reaction N-terminal L-lysyl-[protein] + L-leucyl-tRNA(Leu) = N-terminal L-leucyl-L-lysyl-[protein] + tRNA(Leu) + H(+). The enzyme catalyses N-terminal L-arginyl-[protein] + L-leucyl-tRNA(Leu) = N-terminal L-leucyl-L-arginyl-[protein] + tRNA(Leu) + H(+). It carries out the reaction L-phenylalanyl-tRNA(Phe) + an N-terminal L-alpha-aminoacyl-[protein] = an N-terminal L-phenylalanyl-L-alpha-aminoacyl-[protein] + tRNA(Phe). Its function is as follows. Functions in the N-end rule pathway of protein degradation where it conjugates Leu, Phe and, less efficiently, Met from aminoacyl-tRNAs to the N-termini of proteins containing an N-terminal arginine or lysine. In Gluconobacter oxydans (strain 621H) (Gluconobacter suboxydans), this protein is Leucyl/phenylalanyl-tRNA--protein transferase.